A 132-amino-acid chain; its full sequence is Small ribosomal subunit protein uS9 (132 aa).

Belongs to the universal ribosomal protein uS9 family.

In Halobacterium salinarum (strain ATCC 700922 / JCM 11081 / NRC-1) (Halobacterium halobium), this protein is Small ribosomal subunit protein uS9 (rps9).